The following is a 67-amino-acid chain: uncharacterized protein (67 aa).

This is an uncharacterized protein from Dictyostelium discoideum (Social amoeba).